Here is a 627-residue protein sequence, read N- to C-terminus: Neuronal acetylcholine receptor subunit alpha-4 (627 aa).

Residues Met1–Ser28 form the signal peptide. Residues His29 to Leu242 lie on the Extracellular side of the membrane. Asn57 carries N-linked (GlcNAc...) asparagine glycosylation. Residues Val76 and Glu78 each contribute to the Ca(2+) site. 2 N-linked (GlcNAc...) asparagine glycosylation sites follow: Asn107 and Asn174. Disulfide bonds link Cys161–Cys175 and Cys225–Cys226. A helical transmembrane segment spans residues Pro243–Leu267. The S-palmitoyl cysteine moiety is linked to residue Cys271. Transmembrane regions (helical) follow at residues Ile275–Thr293 and Tyr309–Val330. Residues His331–Arg600 are Cytoplasmic-facing. 2 disordered regions span residues Pro382–Glu479 and Asp497–Pro559. Residues Ser424, Ser538, and Ser541 each carry the phosphoserine modification. A helical transmembrane segment spans residues Ile601–Leu619.

Belongs to the ligand-gated ion channel (TC 1.A.9) family. Acetylcholine receptor (TC 1.A.9.1) subfamily. Alpha-4/CHRNA4 sub-subfamily. Neuronal AChR is composed of two different types of subunits: alpha and beta. CHRNA4 forms heteropentameric neuronal acetylcholine receptors with CHRNB2 and CHRNB4, as well as CHRNA5 and CHRNB3 as accesory subunits. Found in two major stoichiometric forms, LS (low agonist sensitivity): (CHRNA4)3:(CHRNB2)2 and HS (high agonist sensitivity): (CHRNA4)2:(CHRNB2)3, the two stoichiometric forms differ in their unitary conductance, calcium permeability, ACh sensitivity and potentiation by divalent cation. Cells produce predominantly an (CHRNA4)3:(CHRNB2)2 nAChR. The (CHRNA4)2:(CHRNB2)3 expression is selectively up-regulated by nicotine and has lower single channel conductance and calcium permeability. In the striatum, also forms CHRNA4:CHRNA6:CHRNB2 complexes. Also found in the stoichiometric form: (CHRNA4:CHRNB2)2:CHRNB3. Interacts with RIC3; which is required for proper folding and assembly. Interacts with LYPD6.

The protein localises to the synaptic cell membrane. Its subcellular location is the cell membrane. It carries out the reaction Ca(2+)(in) = Ca(2+)(out). It catalyses the reaction K(+)(in) = K(+)(out). The catalysed reaction is Na(+)(in) = Na(+)(out). Activated by a myriad of ligands such as acetylcholine, cytisine, nicotine, choline and epibatidine. Channel potentiation by calcium is stoichiometry-selective, CHRNA4:CHRNB2 nACh receptor is achieved by calcium association with topographically distinct sites framed by anionic residues within the CHRNA4 subunit and between the CHRNA4 and CHRNB2 subunits. nAChR activity is inhibited by the antagonist alpha-conotoxins BuIA, PnIA, GID and MII, small disulfide-constrained peptides from cone snails. Component of neuronal acetylcholine receptors (nAChRs) that function as pentameric, ligand-gated cation channels with high calcium permeability among other activities. nAChRs are excitatory neurotrasnmitter receptors formed by a collection of nAChR subunits known to mediate synaptic transmission in the nervous system and the neuromuscular junction. Each nAchR subunit confers differential attributes to channel properties, including activation, deactivation and desensitization kinetics, pH sensitivity, cation permeability, and binding to allosteric modulators. CHRNA4 forms heteropentameric neuronal acetylcholine receptors with CHRNB2 and CHRNB4, as well as CHRNA5 and CHRNB3 as accesory subunits. Is the most abundant nAChR subtype expressed in the central nervous system. Found in two major stoichiometric forms,(CHRNA4)3:(CHRNB2)2 and (CHRNA4)2:(CHRNB2)3, the two stoichiometric forms differ in their unitary conductance, calcium permeability, ACh sensitivity and potentiation by divalent cation. Involved in the modulation of calcium-dependent signaling pathways, influences the release of neurotransmitters, including dopamine, glutamate and GABA. This is Neuronal acetylcholine receptor subunit alpha-4 (CHRNA4) from Pan troglodytes (Chimpanzee).